The sequence spans 85 residues: Small ribosomal subunit protein bS20 (85 aa).

The protein belongs to the bacterial ribosomal protein bS20 family.

Its function is as follows. Binds directly to 16S ribosomal RNA. This Cytophaga hutchinsonii (strain ATCC 33406 / DSM 1761 / CIP 103989 / NBRC 15051 / NCIMB 9469 / D465) protein is Small ribosomal subunit protein bS20.